The primary structure comprises 1006 residues: Kinesin-like protein KIN-5C (1006 aa).

Positions 9–355 (NVQVLLRCRP…LDYAHRAKNI (347 aa)) constitute a Kinesin motor domain. 95-102 (GQTGTGKT) is an ATP binding site. Residues 371 to 522 (IKDLYGEIER…NASLFQKIAR (152 aa)) are a coiled coil.

Belongs to the TRAFAC class myosin-kinesin ATPase superfamily. Kinesin family. KIN-5/BimC subfamily.

The protein localises to the cytoplasm. The protein resides in the cytoskeleton. It is found in the spindle. Responsible for microtubule translocation. May be important for the organization of phragmoplast-specific arrays of microtubules. Plays an essential role in stabilizing the mitotic spindle. Required during mitotic cytokinesis. This Nicotiana tabacum (Common tobacco) protein is Kinesin-like protein KIN-5C.